The following is a 348-amino-acid chain: Nuclear receptor subfamily 1 group I member 3 (348 aa).

Positions 8–83 (PRSCMVCGDR…AGMKKEMILS (76 aa)) form a DNA-binding region, nuclear receptor. An NR C4-type zinc finger spans residues 11–31 (CMVCGDRATGYHFHALTCEGC). The residue at position 38 (T38) is a Phosphothreonine; by PKC. The segment at 47–71 (CPFAGSCKVNKAQRRHCPACRLQKC) adopts an NR C4-type zinc-finger fold. An NR LBD domain is found at 109 to 348 (GQQELVQTLL…MMPLLQEICS (240 aa)).

The protein belongs to the nuclear hormone receptor family. NR1 subfamily. As to quaternary structure, heterodimer of NR1I3 and RXR. Interacts with PSMC4. Interacts with ECT2. Directly interacts with DNAJC7; this complex may also include HSP90. Interacts with CRY1. Interacts with CRY2 in a ligand-dependent manner. In terms of processing, phosphorylated at Thr-38 by PKC, dephosphorylation of Thr-38 is required for nuclear translocation and activation.

Its subcellular location is the nucleus. The protein localises to the cytoplasm. It is found in the cytoskeleton. Its function is as follows. Binds and transactivates the retinoic acid response elements that control expression of the retinoic acid receptor beta 2 and alcohol dehydrogenase 3 genes. Transactivates both the phenobarbital responsive element module of the human CYP2B6 gene and the CYP3A4 xenobiotic response element. The chain is Nuclear receptor subfamily 1 group I member 3 (NR1I3) from Pusa sibirica (Baikal seal).